Reading from the N-terminus, the 450-residue chain is Tubulin beta-3 chain (450 aa).

The short motif at 1–4 (MREI) is the MREI motif element. GTP-binding residues include Gln11, Glu69, Ser138, Gly142, Thr143, and Gly144. Mg(2+) is bound at residue Glu69. A Phosphoserine; by CDK1 modification is found at Ser172. Positions 204 and 226 each coordinate GTP. Residues 422 to 450 (YQQYQDATAEEEGEMYEDDDEESEAQGPK) form a disordered region. Residues 429–450 (TAEEEGEMYEDDDEESEAQGPK) show a composition bias toward acidic residues. The residue at position 438 (Glu438) is a 5-glutamyl polyglutamate. The residue at position 444 (Ser444) is a Phosphoserine.

This sequence belongs to the tubulin family. Heterodimer of alpha- and beta-tubulin. A typical microtubule is a hollow water-filled tube with an outer diameter of 25 nm and an inner diameter of 15 nM. Alpha-beta heterodimers associate head-to-tail to form protofilaments running lengthwise along the microtubule wall with the beta-tubulin subunit facing the microtubule plus end conferring a structural polarity. Microtubules usually have 13 protofilaments but different protofilament numbers can be found in some organisms and specialized cells. Interacts with gamma-tubulin; the interaction allows microtubules to nucleate from the gamma-tubulin ring complex (gTuRC). Interacts with UNC5C (via cytoplasmic domain); this interaction is decreased by NTN1/Netrin-1. Interacts with NLRP5/MATER at cytoskeleton microtubules. Interacts with DPYSL5. Interacts with CFAP61. It depends on Mg(2+) as a cofactor. Post-translationally, some glutamate residues at the C-terminus are polyglycylated, resulting in polyglycine chains on the gamma-carboxyl group. Glycylation is mainly limited to tubulin incorporated into axonemes (cilia and flagella) whereas glutamylation is prevalent in neuronal cells, centrioles, axonemes, and the mitotic spindle. Both modifications can coexist on the same protein on adjacent residues, and lowering polyglycylation levels increases polyglutamylation, and reciprocally. Cilia and flagella glycylation is required for their stability and maintenance. Flagella glycylation controls sperm motility. In terms of processing, some glutamate residues at the C-terminus are polyglutamylated, resulting in polyglutamate chains on the gamma-carboxyl group. Polyglutamylation plays a key role in microtubule severing by spastin (SPAST). SPAST preferentially recognizes and acts on microtubules decorated with short polyglutamate tails: severing activity by SPAST increases as the number of glutamates per tubulin rises from one to eight, but decreases beyond this glutamylation threshold. Glutamylation is also involved in cilia motility. Phosphorylated on Ser-172 by CDK1 during the cell cycle, from metaphase to telophase, but not in interphase. This phosphorylation inhibits tubulin incorporation into microtubules.

It localises to the cytoplasm. The protein localises to the cytoskeleton. It is found in the cell projection. Its subcellular location is the growth cone. The protein resides in the lamellipodium. It localises to the filopodium. Its function is as follows. Tubulin is the major constituent of microtubules, protein filaments consisting of alpha- and beta-tubulin heterodimers. Microtubules grow by the addition of GTP-tubulin dimers to the microtubule end, where a stabilizing cap forms. Below the cap, alpha-beta tubulin heterodimers are in GDP-bound state, owing to GTPase activity of alpha-tubulin. TUBB3 plays a critical role in proper axon guidance and maintenance. Binding of NTN1/Netrin-1 to its receptor UNC5C might cause dissociation of UNC5C from polymerized TUBB3 in microtubules and thereby lead to increased microtubule dynamics and axon repulsion. Plays a role in dorsal root ganglion axon projection towards the spinal cord. This Rattus norvegicus (Rat) protein is Tubulin beta-3 chain (Tubb3).